A 471-amino-acid polypeptide reads, in one-letter code: Nuclear receptor subfamily 0 group B member 1 (471 aa).

3 consecutive repeat copies span residues 1–67 (MAGE…YRCC), 68–134 (FCGE…YRCC), and 135–201 (FCGE…YRCC). A 4 X 67 AA tandem repeats region spans residues 1-253 (MAGEDHQWQG…QRVALKSPQV (253 aa)). 3 consecutive short sequence motifs (LXXLL motif) follow at residues 13–17 (LYNML), 80–84 (LYNML), and 147–151 (LYSLL). The stretch at 202-253 (FCGEDHPRQSGILCNMPMSAKQTHVAPEAQPGAPWWDPSCAAQRVALKSPQV) is one 4; truncated repeat. The NR LBD domain maps to 210–470 (QSGILCNMPM…DMMLEMLCAK (261 aa)). Positions 462-467 (MMLEML) match the AF-2 motif motif.

Belongs to the nuclear hormone receptor family. NR0 subfamily. In terms of assembly, homodimer. Interacts with NR5A1, NR5A2, NR0B2 and with COPS2. Interacts with ESRRB; represses ESRRB activity at the GATA6 promoter.

The protein resides in the nucleus. Its subcellular location is the cytoplasm. Its function is as follows. Nuclear receptor that lacks a DNA-binding domain and acts as a corepressor that inhibits the transcriptional activity of other nuclear receptors through heterodimeric interactions. Component of a cascade required for the development of the hypothalamic-pituitary-adrenal-gonadal axis. May also have a role in the development of the embryo and in the maintenance of embryonic stem cell pluripotency. The chain is Nuclear receptor subfamily 0 group B member 1 (NR0B1) from Sus scrofa (Pig).